Consider the following 41-residue polypeptide: uncharacterized protein (41 aa).

Residues 8–28 form a helical membrane-spanning segment; that stretch reads IKKIAMFFLGILVGVFIVLFF.

Its subcellular location is the membrane. This is an uncharacterized protein from Streptococcus pneumoniae serotype 2 (strain D39 / NCTC 7466).